A 1012-amino-acid chain; its full sequence is Centriole and centriolar satellite protein OFD1 (1012 aa).

The 33-residue stretch at 70 to 102 (LIGASNSLVADHLQRCGYEYSLSVFFPESGLAK) folds into the LisH domain. 2 coiled-coil regions span residues 189–557 (QRIK…ENEV) and 622–662 (DSDL…NSAK). The segment at 609-665 (TNYPTAWVEGSSPDSDLEFVANTKARVKELQQEAERLEKAFRSYHRRVIKNSAKSPL) is mediates homooligomerization. The segment at 615–1012 (WVEGSSPDSD…FSHEELDDSW (398 aa)) is mediates the interaction with SDCCAG8. Phosphoserine is present on residues serine 663, serine 669, serine 686, and serine 720. Residues 719–744 (GSAASRLRGGTSSRRLSSTPLPKAKR) are disordered. Residues 720-737 (SAASRLRGGTSSRRLSST) show a composition bias toward low complexity. A Phosphoserine; by PKA modification is found at serine 735. Residues serine 745, serine 774, serine 789, and serine 811 each carry the phosphoserine modification. A disordered region spans residues 757–794 (RSHIASPSPCPDRMPLPSPTESRHSLSIPPVSSPPEQK). Residues 764–774 (SPCPDRMPLPS) show a composition bias toward pro residues. 2 disordered regions span residues 824–904 (FESS…LQEV) and 963–1012 (KIIQ…DDSW). Residues 867–956 (SVDQKQIEEQ…IKDKSAHSEN (90 aa)) are a coiled coil. 2 stretches are compositionally biased toward basic and acidic residues: residues 871–904 (KQIEEQKEEEKIREQQVKERRQREERRQSNLQEV) and 973–982 (SADKSSKKMV).

It belongs to the OFD1 family. In terms of assembly, homooligomer. Interacts with LCA5. Interacts with RUVBL1; the interaction is direct and may mediate interaction with the NuA4 histone acetyltransferase complex. Interacts with SDCCAG8; the interaction is direct. Interacts with MAP1LC3B. Interacts with C2CD3; OFD1 may act as a negative regulator of C2CD3. Forms a complex with KIAA0753/OFIP and CEP20/FOR20; the interaction with CEP20 is detected only in the presence of KIAA0753. Interacts with PCM1; this interaction may be mediated by KIAA0753/OFIP. Interacts with TBC1D31; regulates OFD1 activity in cilium assembly. Phosphorylated. Phosphorylation at Ser-735, by the cAMP-dependent protein kinase PKA, triggers ubiquitination and proteasomal degradation of OFD1. Also increases its interaction with TBC1D31 and regulates its function in ciliogenesis. Post-translationally, ubiquitinated by PJA2, upon phosphorylation at Ser-735 by PKA, leads to the proteasomal degradation of OFD1. In terms of tissue distribution, widely expressed. Expressed in 9 and 14 weeks old embryos in metanephric mesenchyme, oral mucosa, lung, heart, nasal and cranial cartilage, and brain. Expressed in metanephros, brain, tongue, and limb.

Its subcellular location is the cytoplasm. It is found in the cytoskeleton. The protein localises to the microtubule organizing center. The protein resides in the centrosome. It localises to the centriole. Its subcellular location is the cilium basal body. It is found in the nucleus. The protein localises to the centriolar satellite. Functionally, component of the centrioles controlling mother and daughter centrioles length. Recruits to the centriole IFT88 and centriole distal appendage-specific proteins including CEP164. Involved in the biogenesis of the cilium, a centriole-associated function. The cilium is a cell surface projection found in many vertebrate cells required to transduce signals important for development and tissue homeostasis. Plays an important role in development by regulating Wnt signaling and the specification of the left-right axis. Only OFD1 localized at the centriolar satellites is removed by autophagy, which is an important step in the ciliogenesis regulation. This Homo sapiens (Human) protein is Centriole and centriolar satellite protein OFD1 (OFD1).